The following is a 464-amino-acid chain: Putative F-box/LRR-repeat protein At3g59160 (464 aa).

An F-box domain is found at 12-60 (KDMINDLPDALLCHVLSYLTTKEAASTSLLSRRWRYLLAFVPNLEFDDS). LRR repeat units lie at residues 172–198 (TLKI…HLES), 200–225 (MFDE…VLHH), 233–258 (SCSV…GMHE), 336–367 (VLCL…TIQS), 368–393 (TPKV…VFQG), and 408–433 (KIEK…VLHY).

The sequence is that of Putative F-box/LRR-repeat protein At3g59160 from Arabidopsis thaliana (Mouse-ear cress).